The primary structure comprises 548 residues: Flagellin (548 aa).

Belongs to the bacterial flagellin family.

Its subcellular location is the secreted. It localises to the bacterial flagellum. Functionally, flagellin is the subunit protein which polymerizes to form the filaments of bacterial flagella. This is Flagellin (fliC) from Escherichia coli O127:H6 (strain E2348/69 / EPEC).